Consider the following 62-residue polypeptide: Temporin-HN1 (62 aa).

An N-terminal signal peptide occupies residues 1-22; the sequence is MFTLKKSLLLLLFLGTINLSLS. Residues 23 to 44 constitute a propeptide that is removed on maturation; sequence EQERNAEEERRDDPEEMDAEVE. Leu60 is subject to Leucine amide.

As to expression, expressed by the skin glands.

It is found in the secreted. Has antimicrobial activity against some Gram-positive bacteria and fungi but has no activity against a range of Gram-negative bacteria except P.faecalis. Active against the Gram-positive bacteria S.aureus ATCC 25923 (MIC=37.5 uM), S.carnosus KHS (MIC=37.5 uM), B.licheniformis X39 (MIC=19 uM), R.rhodochrous X15 (MIC=4.8 uM), is virtually inactive against E.faecalis 981 (MIC=150 uM) and inactive against E.faecium 091299. Has some antimicrobial activity against the Gram-negative bacterium P.faecalis X29 (MIC=75 uM) and is inactive against E.coli, P.aeruginosa and S.typhi. Has antifungal activity against C.albicans ATCC 2002 (MIC=19 uM) and lower activity against the slime mold 090223 (MIC=75 uM). Has low hemolytic activity against human erythrocytes (LC(50)=75 uM). This chain is Temporin-HN1, found in Odorrana hainanensis (Odor frog).